The chain runs to 221 residues: Protein N-terminal glutamine amidohydrolase (221 aa).

The residue at position 2 (S2) is an N-acetylserine. Residues C23, H79, and D97 contribute to the active site.

This sequence belongs to the NTAQ1 family. Monomer.

It catalyses the reaction N-terminal L-glutaminyl-[protein] + H2O = N-terminal L-glutamyl-[protein] + NH4(+). Functionally, mediates the side-chain deamidation of N-terminal glutamine residues to glutamate, an important step in N-end rule pathway of protein degradation. Conversion of the resulting N-terminal glutamine to glutamate renders the protein susceptible to arginylation, polyubiquitination and degradation as specified by the N-end rule. Does not act on substrates with internal or C-terminal glutamine and does not act on non-glutamine residues in any position. Involved in immune response. Controls the expression of specific defense-response genes, activates the synthesis pathway for the phytoalexin camalexin, and influences basal resistance to the hemibiotroph pathogen Pseudomonas syringae pv tomato (Pst). This is Protein N-terminal glutamine amidohydrolase from Arabidopsis thaliana (Mouse-ear cress).